The following is a 733-amino-acid chain: Microtubule-associated protein tau (733 aa).

Positions 1-16 (MADPRQEFDTMEDHAG) are enriched in basic and acidic residues. Residues 1–548 (MADPRQEFDT…PVPMPDLKNV (548 aa)) are disordered. An N-acetylalanine modification is found at A2. Y18 is subject to Phosphotyrosine; by FYN. K33 is covalently cross-linked (Glycyl lysine isopeptide (Lys-Gly) (interchain with G-Cter in ubiquitin)). 2 positions are modified to phosphoserine: S35 and S50. Residues 50-60 (SETSDAKSTPT) are compositionally biased toward polar residues. T58, T60, and T100 each carry phosphothreonine. At R115 the chain carries Omega-N-methylarginine. A compositionally biased stretch (polar residues) spans 126–137 (SDWTRQQVSSMS). Residues 157-172 (RPEDIEKSHPASELLR) are compositionally biased toward basic and acidic residues. Phosphoserine is present on S188. The segment covering 189–202 (EEEVDEDLTVDESS) has biased composition (acidic residues). Residues 203 to 212 (QDSPPSQASL) are compositionally biased toward polar residues. 2 stretches are compositionally biased toward basic and acidic residues: residues 270-294 (EEGHEAAPEFTFHVEIKASTPKEQD) and 354-366 (ASKDRTGNDEKKA). The segment covering 413-427 (KHVSSVTPRNGSPGT) has biased composition (polar residues). T445 bears the Phosphothreonine mark. Omega-N-methylarginine is present on R447. S451 carries the phosphoserine modification. N6,N6-dimethyllysine; alternate is present on K455. N6-acetyllysine; alternate is present on K455. Phosphothreonine occurs at positions 461, 467, and 468. Phosphoserine is present on S470. A Phosphothreonine modification is found at T473. A phosphoserine mark is found at S477, S483, and S487. A compositionally biased stretch (low complexity) spans 479–506 (EPPKSGERSGYSSPGSPGTPGSRSRTPS). At Y489 the chain carries Phosphotyrosine. Phosphoserine is present on residues S490, S491, and S494. 2 positions are modified to phosphothreonine: T497 and T504. S506 bears the Phosphoserine mark. Phosphothreonine is present on T509. At K517 the chain carries N6-acetyllysine. T523 is subject to Phosphothreonine. Residues S527, S529, and S531 each carry the phosphoserine modification. 4 Tau/MAP repeats span residues 536 to 566 (QTAPVPMPDLKNVRSKIGSTENLKHQPGGGK), 567 to 597 (VQIINKKLDLSNVQSKCGSKDNIKHVPGGGS), 598 to 628 (VQIVYKPVDLSKVTSKCGSLGNIHHKPGGGQ), and 629 to 660 (VEVKSEKLDFKDRVQSKIGSLDNITHVPGGGN). K546 participates in a covalent cross-link: Glycyl lysine isopeptide (Lys-Gly) (interchain with G-Cter in ubiquitin). K551 bears the N6-acetyllysine; alternate mark. Residue K551 is modified to N6-methyllysine; alternate. K551 participates in a covalent cross-link: Glycyl lysine isopeptide (Lys-Gly) (interchain with G-Cter in ubiquitin); alternate. S554 is subject to Phosphoserine; by MARK1, BRSK1, BRSK2 and PHK. K559 participates in a covalent cross-link: Glycyl lysine isopeptide (Lys-Gly) (interchain with G-Cter in ubiquitin). At K573 the chain carries N6-acetyllysine; alternate. K573 participates in a covalent cross-link: Glycyl lysine isopeptide (Lys-Gly) (interchain with G-Cter in ubiquitin); alternate. 2 positions are modified to phosphoserine: S577 and S581. K582 carries the post-translational modification N6-acetyllysine. A disulfide bond links C583 and C614. Position 585 is a phosphoserine (S585). K590 is subject to N6-acetyllysine; alternate. A Glycyl lysine isopeptide (Lys-Gly) (interchain with G-Cter in ubiquitin); alternate cross-link involves residue K590. The residue at position 597 (S597) is a Phosphoserine. At K603 the chain carries N6,N6-dimethyllysine; alternate. Residues K603, K609, and K613 each carry the N6-acetyllysine; alternate modification. Residues K603, K609, and K613 each participate in a glycyl lysine isopeptide (Lys-Gly) (interchain with G-Cter in ubiquitin); alternate cross-link. S616 carries the phosphoserine modification. Residues K623, K635, and K639 each carry the N6-acetyllysine; alternate modification. Residues K623, K635, and K639 each participate in a glycyl lysine isopeptide (Lys-Gly) (interchain with G-Cter in ubiquitin); alternate cross-link. R641 carries the omega-N-methylarginine modification. S644 carries the post-translational modification Phosphoserine. K645 is covalently cross-linked (Glycyl lysine isopeptide (Lys-Gly) (interchain with G-Cter in ubiquitin)). Phosphoserine is present on S648. Residue K661 is modified to N6-acetyllysine; alternate. A Glycyl lysine isopeptide (Lys-Gly) (interchain with G-Cter in ubiquitin); alternate cross-link involves residue K661. K667 participates in a covalent cross-link: Glycyl lysine isopeptide (Lys-Gly) (interchain with G-Cter in ubiquitin). An N6-acetyllysine; alternate modification is found at K677. Residue K677 forms a Glycyl lysine isopeptide (Lys-Gly) (interchain with G-Cter in ubiquitin); alternate linkage. Y686 carries the phosphotyrosine modification. A Phosphoserine modification is found at S688. The tract at residues 690–709 (VVSGDTSPRHLSNVSSTGSI) is disordered. At S692 the chain carries Phosphoserine; alternate. S692 carries O-linked (GlcNAc...) serine; alternate glycosylation. Positions 693 to 708 (GDTSPRHLSNVSSTGS) are enriched in polar residues. T695 carries the phosphothreonine modification. Residues S696, S701, S708, and S714 each carry the phosphoserine modification. The residue at position 719 (T719) is a Phosphothreonine.

In terms of assembly, interacts with MARK1, MARK2, MARK3 and MARK4. Interacts with SQSTM1 when polyubiquitinated. Interacts with PSMC2 through SQSTM1. Interacts with FKBP4. Binds to CSNK1D. Interacts with SGK1. Interacts with EPM2A; the interaction dephosphorylates MAPT at Ser-369. Interacts with PIN1. Interacts with LRRK2. Interacts with LRP1, leading to endocytosis; this interaction is reduced in the presence of LRPAP1/RAP. Polyubiquitinated. Requires functional TRAF6 and may provoke SQSTM1-dependent degradation by the proteasome. In terms of processing, phosphorylation at various serine and threonine residues in S-P or T-P motifs by proline-directed protein kinases (PDPK1, CDK1, CDK5, GSK3, MAPK) (a few sites per protein in interphase, more in mitosis), and at serine residues in K-X-G-S motifs by MAP/microtubule affinity-regulating kinase (MARK1, MARK2, MARK3, MARK4), causing detachment from microtubules, and their disassembly. Phosphorylated by PHK. Dephosphorylation at several serine and threonine residues by the serine/threonine phosphatase PPP5C. Phosphorylation at Ser-554 by BRSK1 and BRSK2 in neurons affects ability to bind microtubules and plays a role in neuron polarization. Phosphorylation at Ser-188 by SGK1 mediates microtubule depolymerization and neurite formation in hippocampal neurons. As to expression, expressed in neurons and at a lower level in the liver and kidney. Isoform PNS-tau is expressed in the peripheral nervous system while the others are expressed in the central nervous system.

Its subcellular location is the cytoplasm. The protein localises to the cytosol. It localises to the cell membrane. It is found in the cytoskeleton. The protein resides in the cell projection. Its subcellular location is the axon. The protein localises to the dendrite. It localises to the secreted. In terms of biological role, promotes microtubule assembly and stability, and might be involved in the establishment and maintenance of neuronal polarity. The C-terminus binds axonal microtubules while the N-terminus binds neural plasma membrane components, suggesting that tau functions as a linker protein between both. Axonal polarity is predetermined by tau localization (in the neuronal cell) in the domain of the cell body defined by the centrosome. The short isoforms allow plasticity of the cytoskeleton whereas the longer isoforms may preferentially play a role in its stabilization. This chain is Microtubule-associated protein tau, found in Mus musculus (Mouse).